An 80-amino-acid polypeptide reads, in one-letter code: Dolichol-phosphate mannose synthase subunit 2 (80 aa).

2 helical membrane-spanning segments follow: residues 10–30 (LLLS…VIIL) and 50–70 (ILVP…FIGM).

This sequence belongs to the DPM2 family. As to quaternary structure, component of the dolichol-phosphate mannose (DPM) synthase complex composed of DPMS1, DPMS2 and DPMS3; in the complex interacts directly with DPMS3. Associates with the GPI-GlcNAc transferase (GPI-GnT) complex.

It is found in the endoplasmic reticulum membrane. It participates in protein modification; protein glycosylation. Its function is as follows. Regulates the biosynthesis of dolichol phosphate-mannose. Regulatory subunit of the dolichol-phosphate mannose (DPM) synthase complex; essential for the ER localization and stable expression of DPMS1. This Arabidopsis thaliana (Mouse-ear cress) protein is Dolichol-phosphate mannose synthase subunit 2.